We begin with the raw amino-acid sequence, 104 residues long: Protein RnfH (104 aa).

A disordered region spans residues proline 80 to asparagine 104.

Belongs to the UPF0125 (RnfH) family.

The sequence is that of Protein RnfH from Alcanivorax borkumensis (strain ATCC 700651 / DSM 11573 / NCIMB 13689 / SK2).